Consider the following 402-residue polypeptide: Multidrug resistance protein MdtH (402 aa).

Residues 1–12 (MSRVSQARNLGK) lie on the Cytoplasmic side of the membrane. Residues 13–33 (YFLLIDNMLVVLGFFVVFPLI) traverse the membrane as a helical segment. At 34–98 (SIRFVDQMGW…GFATMGIAHE (65 aa)) the chain is on the periplasmic side. A helical membrane pass occupies residues 99-116 (PWLLWFSCFLSGLGGTLF). At 117–138 (DPPRSALVVKLIRPEQRGRFFS) the chain is on the cytoplasmic side. A helical membrane pass occupies residues 139–159 (LLMMQDSAGAVIGALLGSWLL). Topologically, residues 160-164 (QYDFR) are periplasmic. Residues 165 to 185 (LVCATGAILFILCALFNAWLL) traverse the membrane as a helical segment. The Cytoplasmic portion of the chain corresponds to 186–213 (PAWKLSTVRTPVREGMRRVMSDKRFVTY). Residues 214–234 (VLTLAGYYMLAVQVMLMLPIM) traverse the membrane as a helical segment. Topologically, residues 235–243 (VNDIAGSPA) are periplasmic. The helical transmembrane segment at 244-264 (AVKWMYAIEACLSLTLLYPIA) threads the bilayer. Residues 265-276 (RWSEKRFRLEHR) are Cytoplasmic-facing. Residues 277-297 (LMAGLLVMSLSMIPIGMVGNL) form a helical membrane-spanning segment. Over 298 to 299 (QQ) the chain is Periplasmic. A helical membrane pass occupies residues 300-320 (LFTLICAFYIGSVIAEPARET). Topologically, residues 321–339 (LSASLADARARGSYMGFSR) are cytoplasmic. Residues 340–360 (LGLAIGGAIGYIGGGWLFDMG) traverse the membrane as a helical segment. Residues 361–367 (KALTQPE) are Periplasmic-facing. The chain crosses the membrane as a helical span at residues 368–388 (LPWMMLGIIGFITFLALGWQF). Residues 389 to 402 (SHKRTPRRMLEPGA) lie on the Cytoplasmic side of the membrane.

Belongs to the major facilitator superfamily. DHA1 family. MdtH (TC 2.A.1.2.21) subfamily.

The protein localises to the cell inner membrane. In Salmonella paratyphi B (strain ATCC BAA-1250 / SPB7), this protein is Multidrug resistance protein MdtH.